The following is a 148-amino-acid chain: Small ribosomal subunit protein eS19 (148 aa).

Belongs to the eukaryotic ribosomal protein eS19 family.

In Dictyostelium discoideum (Social amoeba), this protein is Small ribosomal subunit protein eS19 (rps19).